Consider the following 428-residue polypeptide: Adenylosuccinate synthetase (428 aa).

Residues 12–18 (GDEGKGK) and 40–42 (GHT) contribute to the GTP site. Catalysis depends on Asp-13, which acts as the Proton acceptor. The Mg(2+) site is built by Asp-13 and Gly-40. IMP-binding positions include 13–16 (DEGK), 38–41 (NAGH), Thr-129, Arg-143, Gln-224, Thr-239, and Arg-303. His-41 acts as the Proton donor in catalysis. Residue 299–305 (VTTGRSR) coordinates substrate. GTP contacts are provided by residues Arg-305, 331-333 (KLD), and 413-415 (GVG).

The protein belongs to the adenylosuccinate synthetase family. In terms of assembly, homodimer. Mg(2+) serves as cofactor.

It localises to the cytoplasm. The enzyme catalyses IMP + L-aspartate + GTP = N(6)-(1,2-dicarboxyethyl)-AMP + GDP + phosphate + 2 H(+). The protein operates within purine metabolism; AMP biosynthesis via de novo pathway; AMP from IMP: step 1/2. Its function is as follows. Plays an important role in the de novo pathway of purine nucleotide biosynthesis. Catalyzes the first committed step in the biosynthesis of AMP from IMP. The sequence is that of Adenylosuccinate synthetase from Saccharopolyspora erythraea (strain ATCC 11635 / DSM 40517 / JCM 4748 / NBRC 13426 / NCIMB 8594 / NRRL 2338).